The chain runs to 235 residues: Ribitol-5-phosphate cytidylyltransferase (235 aa).

Residues 7-10 (LAGG), 82-88 (GADRNTS), and Ser-113 contribute to the CTP site.

This sequence belongs to the IspD/TarI cytidylyltransferase family. TarI subfamily.

The catalysed reaction is D-ribitol 5-phosphate + CTP + H(+) = CDP-L-ribitol + diphosphate. It participates in cell wall biogenesis; poly(ribitol phosphate) teichoic acid biosynthesis. Catalyzes the transfer of the cytidylyl group of CTP to D-ribitol 5-phosphate. The polypeptide is Ribitol-5-phosphate cytidylyltransferase (Streptococcus pneumoniae (strain CGSP14)).